A 376-amino-acid chain; its full sequence is Non-structural protein NS2 (376 aa).

Residues 163 to 188 are compositionally biased toward basic and acidic residues; it reads EEREKGAVEQPHKPAFKTERGMNRPD. The tract at residues 163 to 201 is disordered; sequence EEREKGAVEQPHKPAFKTERGMNRPDSDEDQNPAGGVVN.

It belongs to the orbivirus non-structural protein NS2 family.

Functionally, single-stranded RNA-binding protein. The chain is Non-structural protein NS2 (Segment-8) from Antilocapra americana (Pronghorn).